The chain runs to 37 residues: Omega-conotoxin-like S6.7 (37 aa).

The propeptide occupies 1–4; the sequence is KSTS. 3 disulfides stabilise this stretch: Cys5–Cys20, Cys12–Cys23, and Cys19–Cys32.

The protein belongs to the conotoxin O1 superfamily. Expressed by the venom duct.

It localises to the secreted. Functionally, omega-conotoxins act at presynaptic membranes, they bind and block voltage-gated calcium channels (Cav). This toxin blocks N-, P- and Q-type calcium channels. The protein is Omega-conotoxin-like S6.7 of Conus striatus (Striated cone).